The chain runs to 453 residues: UDP-glycosyltransferase 74E2 (453 aa).

His-17 serves as the catalytic Proton acceptor. His-17 serves as a coordination point for an anthocyanidin. Asp-109 (charge relay) is an active-site residue. UDP-alpha-D-glucose contacts are provided by Thr-131, Gln-334, His-349, Trp-352, Asn-353, Ser-354, Glu-357, Asp-373, and Gln-374.

It belongs to the UDP-glycosyltransferase family. Expressed in roots, cotyledons and leaf hydathodes.

The enzyme catalyses (indol-3-yl)butanoate + UDP-alpha-D-glucose = 4-(indol-3-yl)butanoyl-beta-D-glucose + UDP. Its function is as follows. Glucosyltransferase that acts on the auxin indole-3-butyric acid (IBA). Mediates abiotic stress responses and stress-induced morphological adaptations by regulating auxin homeostasis. Possesses low activity in vitro on jasmonate (JA) and the synthetic auxin analog naphthaleneacetic acid (NAA). The sequence is that of UDP-glycosyltransferase 74E2 (UGT74E2) from Arabidopsis thaliana (Mouse-ear cress).